A 431-amino-acid polypeptide reads, in one-letter code: Histidine--tRNA ligase (431 aa).

It belongs to the class-II aminoacyl-tRNA synthetase family. As to quaternary structure, homodimer.

The protein resides in the cytoplasm. It catalyses the reaction tRNA(His) + L-histidine + ATP = L-histidyl-tRNA(His) + AMP + diphosphate + H(+). The protein is Histidine--tRNA ligase of Neisseria meningitidis serogroup A / serotype 4A (strain DSM 15465 / Z2491).